The following is a 145-amino-acid chain: GYQFDKGYISPYFVTNPETMEAVLEDAFILIVEKKVSNVRELLPILEQVAQTGKPLLIIAEDVEGEALATLVVNKLRGTLSVAAVKAPGFGDRRKEMLKDIAAVTGGTVISEELGFKLENATLSMLGRAERVRITKDETTIVGGK.

Belongs to the chaperonin (HSP60) family. As to quaternary structure, forms a cylinder of 14 subunits composed of two heptameric rings stacked back-to-back. Interacts with the co-chaperonin GroES.

The protein localises to the cytoplasm. It catalyses the reaction ATP + H2O + a folded polypeptide = ADP + phosphate + an unfolded polypeptide.. In terms of biological role, together with its co-chaperonin GroES, plays an essential role in assisting protein folding. The GroEL-GroES system forms a nano-cage that allows encapsulation of the non-native substrate proteins and provides a physical environment optimized to promote and accelerate protein folding. This Thermus thermophilus protein is Chaperonin GroEL.